Here is a 734-residue protein sequence, read N- to C-terminus: Photosystem I P700 chlorophyll a apoprotein A2 (734 aa).

8 helical membrane-spanning segments follow: residues 46–69 (IFAS…FHVA), 135–158 (LYIG…LHLQ), 175–199 (LNHH…HVAI), 273–291 (IAHH…GHMY), 330–353 (LHFQ…QHMY), 369–395 (AALY…IFFI), 417–439 (AIIS…LYVH), and 517–535 (FLVH…LILV). The [4Fe-4S] cluster site is built by C559 and C568. Transmembrane regions (helical) follow at residues 575 to 596 (AFYL…YWHW) and 643 to 665 (LSVW…MFLI). Chlorophyll a-binding residues include H654, M662, and Y670. W671 is a binding site for phylloquinone. Residues 707-727 (VVGLAHFSVGYVFTYAAFLIA) form a helical membrane-spanning segment.

The protein belongs to the PsaA/PsaB family. The PsaA/B heterodimer binds the P700 chlorophyll special pair and subsequent electron acceptors. PSI consists of a core antenna complex that captures photons, and an electron transfer chain that converts photonic excitation into a charge separation. The eukaryotic PSI reaction center is composed of at least 11 subunits. Requires P700 is a chlorophyll a/chlorophyll a' dimer, A0 is one or more chlorophyll a, A1 is one or both phylloquinones and FX is a shared 4Fe-4S iron-sulfur center. as cofactor.

Its subcellular location is the plastid. The protein localises to the chloroplast thylakoid membrane. It catalyses the reaction reduced [plastocyanin] + hnu + oxidized [2Fe-2S]-[ferredoxin] = oxidized [plastocyanin] + reduced [2Fe-2S]-[ferredoxin]. In terms of biological role, psaA and PsaB bind P700, the primary electron donor of photosystem I (PSI), as well as the electron acceptors A0, A1 and FX. PSI is a plastocyanin-ferredoxin oxidoreductase, converting photonic excitation into a charge separation, which transfers an electron from the donor P700 chlorophyll pair to the spectroscopically characterized acceptors A0, A1, FX, FA and FB in turn. Oxidized P700 is reduced on the lumenal side of the thylakoid membrane by plastocyanin. This is Photosystem I P700 chlorophyll a apoprotein A2 from Mesostigma viride (Green alga).